Consider the following 165-residue polypeptide: uncharacterized protein (165 aa).

The stretch at 1–38 forms a coiled coil; it reads MFTVKEKNRQELEEELNDLEFQIYRMQENMKDLSKDAK.

This is an uncharacterized protein from Bacillus subtilis (strain 168).